Here is a 257-residue protein sequence, read N- to C-terminus: Protein YIPF5 (257 aa).

Residues 1–124 (MSGFDNLNSG…RASDGSIMNE (124 aa)) are Cytoplasmic-facing. Residues 75–106 (PPTPQTFYGDSFEEEPPLLEELGINFDHIWQK) form an interaction with Sec23 region. A helical transmembrane segment spans residues 125 to 145 (TDLAGPVVFCLAFGATLLLAG). A topological domain (lumenal) is located at residue K146. A helical transmembrane segment spans residues 147–167 (IQFGYVYGISAIGCLGMFCLL). Residues 168 to 173 (NLMSMT) are Cytoplasmic-facing. A helical transmembrane segment spans residues 174-194 (GVSFGCVASVLGYCLLPMILL). Over 195-196 (SS) the chain is Lumenal. Residues 197 to 217 (FAVVFSLQGMVGILLTATIIG) traverse the membrane as a helical segment. Topologically, residues 218–236 (WCSFSASKIFISALAMDGQ) are cytoplasmic. A helical transmembrane segment spans residues 237–257 (QLLVAYPCALLYGVFALISVF).

This sequence belongs to the YIP1 family. In terms of assembly, interacts with the COPII coat components Sec23 (SEC23A and/or SEC23B) and Sec24 (SEC24A and/or SEC24B). Interacts with YIF1A. May interact with RAB1A. Interacts with YIPF3 and YIPF4.

It is found in the endoplasmic reticulum membrane. Its subcellular location is the golgi apparatus. It localises to the cis-Golgi network membrane. The protein localises to the cytoplasmic vesicle. The protein resides in the COPII-coated vesicle. Plays a role in transport between endoplasmic reticulum and Golgi. In pancreatic beta cells, required to transport proinsulin from endoplasmic reticulum into the Golgi. In Rattus norvegicus (Rat), this protein is Protein YIPF5.